A 116-amino-acid chain; its full sequence is Large ribosomal subunit protein bL17 (116 aa).

It belongs to the bacterial ribosomal protein bL17 family. Part of the 50S ribosomal subunit. Contacts protein L32.

In Thermosynechococcus vestitus (strain NIES-2133 / IAM M-273 / BP-1), this protein is Large ribosomal subunit protein bL17.